The chain runs to 573 residues: Putative adenine deaminase PTO1085 (573 aa).

It belongs to the metallo-dependent hydrolases superfamily. Adenine deaminase family.

The enzyme catalyses adenine + H2O + H(+) = hypoxanthine + NH4(+). In Picrophilus torridus (strain ATCC 700027 / DSM 9790 / JCM 10055 / NBRC 100828 / KAW 2/3), this protein is Putative adenine deaminase PTO1085.